The sequence spans 231 residues: Eukaryotic translation initiation factor 4E-1 (231 aa).

A disordered region spans residues Met1 to Pro55. Residues Lys8–Ala18 show a composition bias toward polar residues. The segment covering Glu23–Ser38 has biased composition (acidic residues). Positions Ser39–Ser48 are enriched in low complexity. 2 EIF4G-binding regions span residues His56–Glu59 and Phe66–His102. MRNA contacts are provided by residues Lys74–Gly79, Lys106, and Trp124–Glu125. A disulfide bond links Cys129 and Cys167. The tract at residues Tyr150–Gln159 is EIF4G-binding. Residues Arg174 to Lys179 and Lys219 to Arg223 contribute to the mRNA site.

This sequence belongs to the eukaryotic initiation factor 4E family. EIF4F is a multi-subunit complex, the composition of which varies with external and internal environmental conditions. It is composed of at least EIF4A, EIF4E and EIF4G. EIF4E is also known to interact with other partners. In higher plants two isoforms of EIF4F have been identified, named isoform EIF4F and isoform EIF(iso)4F. Isoform EIF4F has subunits p220 and p26, whereas isoform EIF(iso)4F has subunits p82 and p28. In terms of assembly, (Microbial infection) Interacts with potyvirus peanut stripe virus (PStV) helper component proteinase (HC-Pro) in the cytoplasm and with PStV viral genome-linked protein (VPg) in the nucleus; these interactions are possible in susceptible hosts but impaired in resistant plants. According to the redox status, the Cys-129-Cys-167 disulfide bridge may have a role in regulating protein function by affecting its ability to bind capped mRNA. Expressed ubiquitously with highest levels in young leaves and roots, and lowest levels in flowers.

It is found in the nucleus. Its subcellular location is the cytoplasm. Functionally, component of the protein complex eIF4F, which is involved in the recognition of the mRNA cap, ATP-dependent unwinding of 5'-terminal secondary structure and recruitment of mRNA to the ribosome. Recognizes and binds the 7-methylguanosine-containing mRNA cap during an early step in the initiation of protein synthesis and facilitates ribosome binding by inducing the unwinding of the mRNAs secondary structures. Key component of recessive resistance to potyviruses such as peanut stripe virus (PStV). In terms of biological role, (Microbial infection) Susceptibility host factor required for viral infection by recruiting viral RNAs to the host ribosomal complex via an interaction with viral genome-linked protein (VPg). This chain is Eukaryotic translation initiation factor 4E-1, found in Arachis hypogaea (Peanut).